The sequence spans 219 residues: Elongation factor Ts (219 aa).

An involved in Mg(2+) ion dislocation from EF-Tu region spans residues 82–85 (TDFV).

The protein belongs to the EF-Ts family.

The protein resides in the cytoplasm. In terms of biological role, associates with the EF-Tu.GDP complex and induces the exchange of GDP to GTP. It remains bound to the aminoacyl-tRNA.EF-Tu.GTP complex up to the GTP hydrolysis stage on the ribosome. This is Elongation factor Ts from Trichodesmium erythraeum (strain IMS101).